Consider the following 363-residue polypeptide: Protein-arginine kinase (363 aa).

A Phosphagen kinase C-terminal domain is found at Ile24–Ala254. Residues Ser27–Arg31, His92, Arg125, Arg176–Met180, and Arg207–Glu212 contribute to the ATP site. The RDXXRA motif of the pArg binding pocket involved in allosteric regulation signature appears at Arg337 to Ala342.

Belongs to the ATP:guanido phosphotransferase family.

The catalysed reaction is L-arginyl-[protein] + ATP = N(omega)-phospho-L-arginyl-[protein] + ADP + H(+). Appears to be allosterically activated by the binding of pArg-containing polypeptides to the pArg-binding pocket localized in the C-terminal domain of McsB. Functionally, catalyzes the specific phosphorylation of arginine residues in a large number of proteins. Is part of the bacterial stress response system. Protein arginine phosphorylation has a physiologically important role and is involved in the regulation of many critical cellular processes, such as protein homeostasis, motility, competence, and stringent and stress responses, by regulating gene expression and protein activity. This is Protein-arginine kinase from Bacillus licheniformis (strain ATCC 14580 / DSM 13 / JCM 2505 / CCUG 7422 / NBRC 12200 / NCIMB 9375 / NCTC 10341 / NRRL NRS-1264 / Gibson 46).